Reading from the N-terminus, the 188-residue chain is Large ribosomal subunit protein eL18 (188 aa).

Lys-119 is covalently cross-linked (Glycyl lysine isopeptide (Lys-Gly) (interchain with G-Cter in SUMO2)). Ser-130 bears the Phosphoserine mark. The segment at 150-188 is disordered; that stretch reads RHFGKAPGTPHSHTKPYVRSKGRKFERARGRRASRGYKN. Thr-158 bears the Phosphothreonine mark. Basic residues-rich tracts occupy residues 161–171 and 178–188; these read SHTKPYVRSKG and RGRRASRGYKN. Lys-164 is covalently cross-linked (Glycyl lysine isopeptide (Lys-Gly) (interchain with G-Cter in SUMO2)).

It belongs to the eukaryotic ribosomal protein eL18 family. As to quaternary structure, component of the large ribosomal subunit.

It localises to the cytoplasm. Its subcellular location is the cytosol. The protein resides in the rough endoplasmic reticulum. Its function is as follows. Component of the large ribosomal subunit. The ribosome is a large ribonucleoprotein complex responsible for the synthesis of proteins in the cell. The polypeptide is Large ribosomal subunit protein eL18 (RPL18) (Bos taurus (Bovine)).